The chain runs to 254 residues: Leucyl/phenylalanyl-tRNA--protein transferase (254 aa).

This sequence belongs to the L/F-transferase family.

The protein resides in the cytoplasm. It catalyses the reaction N-terminal L-lysyl-[protein] + L-leucyl-tRNA(Leu) = N-terminal L-leucyl-L-lysyl-[protein] + tRNA(Leu) + H(+). The catalysed reaction is N-terminal L-arginyl-[protein] + L-leucyl-tRNA(Leu) = N-terminal L-leucyl-L-arginyl-[protein] + tRNA(Leu) + H(+). The enzyme catalyses L-phenylalanyl-tRNA(Phe) + an N-terminal L-alpha-aminoacyl-[protein] = an N-terminal L-phenylalanyl-L-alpha-aminoacyl-[protein] + tRNA(Phe). In terms of biological role, functions in the N-end rule pathway of protein degradation where it conjugates Leu, Phe and, less efficiently, Met from aminoacyl-tRNAs to the N-termini of proteins containing an N-terminal arginine or lysine. This Burkholderia cenocepacia (strain HI2424) protein is Leucyl/phenylalanyl-tRNA--protein transferase.